The following is a 96-amino-acid chain: Small ribosomal subunit protein bS20 (96 aa).

It belongs to the bacterial ribosomal protein bS20 family.

In terms of biological role, binds directly to 16S ribosomal RNA. This Thermotoga petrophila (strain ATCC BAA-488 / DSM 13995 / JCM 10881 / RKU-1) protein is Small ribosomal subunit protein bS20.